We begin with the raw amino-acid sequence, 219 residues long: Response regulator ArlR (219 aa).

The Response regulatory domain maps to 3–116 (NILIVEDEQN…ELLARIRAVL (114 aa)). D52 carries the post-translational modification 4-aspartylphosphate. Residues 122–219 (KDVLDINGII…TVRGVGYVIR (98 aa)) constitute a DNA-binding region (ompR/PhoB-type).

Phosphorylated by ArlS.

The protein localises to the cytoplasm. Its function is as follows. Member of the two-component regulatory system ArlS/ArlR. The protein is Response regulator ArlR (arlR) of Staphylococcus epidermidis (strain ATCC 12228 / FDA PCI 1200).